The primary structure comprises 364 residues: UDP-N-acetylglucosamine--N-acetylmuramyl-(pentapeptide) pyrophosphoryl-undecaprenol N-acetylglucosamine transferase (364 aa).

Residues 14-16 (TGG), N126, R163, S190, I246, 265-270 (ALTVSE), and Q291 each bind UDP-N-acetyl-alpha-D-glucosamine.

This sequence belongs to the glycosyltransferase 28 family. MurG subfamily.

The protein localises to the cell inner membrane. The catalysed reaction is di-trans,octa-cis-undecaprenyl diphospho-N-acetyl-alpha-D-muramoyl-L-alanyl-D-glutamyl-meso-2,6-diaminopimeloyl-D-alanyl-D-alanine + UDP-N-acetyl-alpha-D-glucosamine = di-trans,octa-cis-undecaprenyl diphospho-[N-acetyl-alpha-D-glucosaminyl-(1-&gt;4)]-N-acetyl-alpha-D-muramoyl-L-alanyl-D-glutamyl-meso-2,6-diaminopimeloyl-D-alanyl-D-alanine + UDP + H(+). It participates in cell wall biogenesis; peptidoglycan biosynthesis. Its function is as follows. Cell wall formation. Catalyzes the transfer of a GlcNAc subunit on undecaprenyl-pyrophosphoryl-MurNAc-pentapeptide (lipid intermediate I) to form undecaprenyl-pyrophosphoryl-MurNAc-(pentapeptide)GlcNAc (lipid intermediate II). The chain is UDP-N-acetylglucosamine--N-acetylmuramyl-(pentapeptide) pyrophosphoryl-undecaprenol N-acetylglucosamine transferase from Shewanella loihica (strain ATCC BAA-1088 / PV-4).